The chain runs to 144 residues: Large ribosomal subunit protein uL11 (144 aa).

The protein belongs to the universal ribosomal protein uL11 family. In terms of assembly, part of the ribosomal stalk of the 50S ribosomal subunit. Interacts with L10 and the large rRNA to form the base of the stalk. L10 forms an elongated spine to which L12 dimers bind in a sequential fashion forming a multimeric L10(L12)X complex. Post-translationally, one or more lysine residues are methylated.

Forms part of the ribosomal stalk which helps the ribosome interact with GTP-bound translation factors. This Streptomyces coelicolor (strain ATCC BAA-471 / A3(2) / M145) protein is Large ribosomal subunit protein uL11.